The following is a 342-amino-acid chain: 6-hydroxytryprostatin B O-methyltransferase (342 aa).

Residue aspartate 201 coordinates S-adenosyl-L-methionine. Catalysis depends on histidine 244, which acts as the Proton acceptor.

It belongs to the class I-like SAM-binding methyltransferase superfamily. Cation-independent O-methyltransferase family. In terms of assembly, homodimer.

It catalyses the reaction 6-hydroxytryprostatin B + S-adenosyl-L-methionine = tryprostatin A + S-adenosyl-L-homocysteine + H(+). The protein operates within mycotoxin biosynthesis. 6-hydroxytryprostatin B O-methyltransferase; part of the gene cluster that mediates the biosynthesis of fumitremorgins, indole alkaloids that carry not only intriguing chemical structures, but also interesting biological and pharmacological activities. The biosynthesis of fumitremorgin-type alkaloids begins by condensation of the two amino acids L-tryptophan and L-proline to brevianamide F, catalyzed by the non-ribosomal peptide synthetase ftmA. Brevianamide F is then prenylated by the prenyltransferase ftmPT1/ftmB in the presence of dimethylallyl diphosphate, resulting in the formation of tryprostatin B. The three cytochrome P450 monooxygenases, ftmP450-1/ftmC, ftmP450-2/ftmE and ftmP450-3/FtmG, are responsible for the conversion of tryprostatin B to 6-hydroxytryprostatin B, tryprostatin A to fumitremorgin C and fumitremorgin C to 12,13-dihydroxyfumitremorgin C, respectively. The putative methyltransferase ftmMT/ftmD is expected for the conversion of 6-hydroxytryprostatin B to tryprostatin A. FtmPT2/FtmH catalyzes the prenylation of 12,13-dihydroxyfumitre-morgin C in the presence of dimethylallyl diphosphate, resulting in the formation of fumitremorgin B. Fumitremorgin B is further converted to verruculogen by ftmOx1/ftmF via the insertion of an endoperoxide bond between the two prenyl moieties. In some fungal species, verruculogen is further converted to fumitremorgin A, but the enzymes involved in this step have not been identified yet. The polypeptide is 6-hydroxytryprostatin B O-methyltransferase (Aspergillus fumigatus (strain ATCC MYA-4609 / CBS 101355 / FGSC A1100 / Af293) (Neosartorya fumigata)).